The chain runs to 255 residues: uncharacterized protein (255 aa).

This is an uncharacterized protein from Methanocaldococcus jannaschii (strain ATCC 43067 / DSM 2661 / JAL-1 / JCM 10045 / NBRC 100440) (Methanococcus jannaschii).